Here is a 239-residue protein sequence, read N- to C-terminus: DNA repair protein RecO (239 aa).

It belongs to the RecO family.

Its function is as follows. Involved in DNA repair and RecF pathway recombination. This Bifidobacterium longum subsp. infantis (strain ATCC 15697 / DSM 20088 / JCM 1222 / NCTC 11817 / S12) protein is DNA repair protein RecO.